Consider the following 570-residue polypeptide: Proline--tRNA ligase (570 aa).

It belongs to the class-II aminoacyl-tRNA synthetase family. ProS type 1 subfamily. Homodimer.

The protein localises to the cytoplasm. The enzyme catalyses tRNA(Pro) + L-proline + ATP = L-prolyl-tRNA(Pro) + AMP + diphosphate. In terms of biological role, catalyzes the attachment of proline to tRNA(Pro) in a two-step reaction: proline is first activated by ATP to form Pro-AMP and then transferred to the acceptor end of tRNA(Pro). As ProRS can inadvertently accommodate and process non-cognate amino acids such as alanine and cysteine, to avoid such errors it has two additional distinct editing activities against alanine. One activity is designated as 'pretransfer' editing and involves the tRNA(Pro)-independent hydrolysis of activated Ala-AMP. The other activity is designated 'posttransfer' editing and involves deacylation of mischarged Ala-tRNA(Pro). The misacylated Cys-tRNA(Pro) is not edited by ProRS. The sequence is that of Proline--tRNA ligase from Acidithiobacillus ferrooxidans (strain ATCC 23270 / DSM 14882 / CIP 104768 / NCIMB 8455) (Ferrobacillus ferrooxidans (strain ATCC 23270)).